The sequence spans 764 residues: Complement factor B (764 aa).

A signal peptide spans 1–25; it reads MGSNLSPQLCLMPFILGLLSGGVTT. 3 Sushi domains span residues 35–100, 101–160, and 163–220; these read ESCS…ECRA, IHCP…ICDN, and GYCS…SCQD. 6 disulfide bridges follow: Cys37–Cys76, Cys62–Cys98, Cys103–Cys145, Cys131–Cys158, Cys165–Cys205, and Cys191–Cys218. N-linked (GlcNAc...) asparagine glycans are attached at residues Asn122 and Asn142. The region spanning 270-469 is the VWFA domain; the sequence is NIYLVLDGSD…NLEDVFYQMI (200 aa). Residues Ser278 and Ser280 each coordinate Mg(2+). Asn285 carries an N-linked (GlcNAc...) asparagine glycan. Residue Thr353 participates in Mg(2+) binding. N-linked (GlcNAc...) asparagine glycosylation occurs at Asn378. One can recognise a Peptidase S1 domain in the interval 477–757; it reads LCGMVWEHRK…VLPWLKEKLQ (281 aa). Disulfide bonds link Cys478/Cys596, Cys511/Cys527, Cys599/Cys615, Cys656/Cys682, and Cys695/Cys725. Active-site charge relay system residues include His526 and Asp576. Residue Ser699 is the Charge relay system of the active site.

This sequence belongs to the peptidase S1 family. Monomer. Interacts with complement C3b; this interaction is dependent on the presence of Mg(2+). In terms of assembly, catalytic component of the C3 convertase of the alternative complement pathway, also named C3bBb, composed of complement factor B Bb and complement C3b. Catalytic component of the C5 convertase of the alternative complement pathway, also named C3bBb3b, composed of complement factor B Bb and additional molecules of complement C3b. Interacts to CFP; this interaction contributes to the stabilization of the active C3-convertase enzyme complex. Requires Mg(2+) as cofactor. Mn(2+) is required as a cofactor. In terms of processing, cleaved by CFD following activation of the alternative complement system, generating Ba and Bb chains. Cleavage and activation takes place when CFB is already associated with complement C3b.

It is found in the secreted. Its subcellular location is the cell surface. The enzyme catalyses Cleavage of Arg-|-Ser bond in complement component C3 alpha-chain to yield C3a and C3b, and Arg-|-Xaa bond in complement component C5 alpha-chain to yield C5a and C5b.. Its function is as follows. Precursor of the catalytic component of the C3 and C5 convertase complexes of the alternative pathway of the complement system, a cascade of proteins that leads to phagocytosis and breakdown of pathogens and signaling that strengthens the adaptive immune system. The alternative complement pathway acts as an amplification loop that enhances other complement pathways (classical, lectin and GZMK) by promoting formation of additional C3 and C5 convertases. CFB is cleaved and activated by CFD to generate Ba and Bb chains; Bb chain constituting the catalytic component of the C3 and C5 convertases. In terms of biological role, serine protease component of the complement C3 and C5 convertase complexes of the alternative complement pathway. Following cleavage and activation by factor D (CFD), forms the C3 convertase together with complement C3b. As part of the C3 convertase, cleaves and activates C3 into C3a anaphylatoxin and C3b opsonin, the next components of the complement pathways. When an additional complement C3b molecule binds to the C3 convertase, forms the C5 convertase, which cleaves and activates C5 into C5a anaphylatoxin and C5b component of the membrane attack complex. Functionally, involved in proliferation and differentiation of preactivated B-lymphocytes, rapid spreading of peripheral blood monocytes, stimulation of lymphocyte blastogenesis and lysis of erythrocytes. This is Complement factor B (CFB) from Pan troglodytes (Chimpanzee).